Consider the following 485-residue polypeptide: uncharacterized protein (485 aa).

The signal sequence occupies residues 1–23 (MRRRVCTVVRAVVCLLSTSLLTT). A lipid anchor (N-palmitoyl cysteine) is attached at C24. C24 is lipidated: S-diacylglycerol cysteine. Over residues 308–327 (SAASSPAQCPSSPSSSSSSS) the composition is skewed to low complexity. Residues 308–331 (SAASSPAQCPSSPSSSSSSSTNAG) are disordered.

The protein belongs to the TP013X lipoprotein family.

The protein resides in the cell membrane. This is an uncharacterized protein from Treponema pallidum (strain Nichols).